Here is a 187-residue protein sequence, read N- to C-terminus: Probable cobalt-precorrin-6B C(15)-methyltransferase (decarboxylating) (187 aa).

Residues threonine 17, 41–45 (GCGTG), aspartate 62, and glycine 91 each bind S-adenosyl-L-methionine.

It belongs to the methyltransferase superfamily. Archaeal-type CbiT family.

It catalyses the reaction Co-precorrin-6B + S-adenosyl-L-methionine = Co-precorrin-7 + S-adenosyl-L-homocysteine + CO2. Its pathway is cofactor biosynthesis; adenosylcobalamin biosynthesis; cob(II)yrinate a,c-diamide from sirohydrochlorin (anaerobic route): step 8/10. In terms of biological role, catalyzes the methylation of C-15 in cobalt-precorrin-6B followed by the decarboxylation of C-12 to form cobalt-precorrin-7. This chain is Probable cobalt-precorrin-6B C(15)-methyltransferase (decarboxylating), found in Methanobrevibacter smithii (strain ATCC 35061 / DSM 861 / OCM 144 / PS).